A 40-amino-acid chain; its full sequence is Photosystem II reaction center protein X (40 aa).

Residues 1 to 11 (TITPSLKGFFI) are Lumenal-facing. A helical membrane pass occupies residues 12–28 (GLLSGAVVLGLTFAVLI). At 29 to 40 (AISQIDKVQRSL) the chain is on the cytoplasmic side.

It belongs to the PsbX family. Type 1 subfamily. PSII is composed of 1 copy each of membrane proteins PsbA, PsbB, PsbC, PsbD, PsbE, PsbF, PsbH, PsbI, PsbJ, PsbK, PsbL, PsbM, PsbT, PsbX, PsbY, PsbZ, Psb30/Ycf12, peripheral proteins PsbO, CyanoQ (PsbQ), PsbU, PsbV and a large number of cofactors. It forms dimeric complexes. Requires PSII binds multiple chlorophylls, carotenoids and specific lipids. as cofactor.

The protein resides in the cellular thylakoid membrane. Its function is as follows. Involved in the binding and/or turnover of quinones at the Q(B) site of photosystem II (PSII). PSII is a light-driven water plastoquinone oxidoreductase, using light energy to abstract electrons from H(2)O, generating a proton gradient subsequently used for ATP formation. The protein is Photosystem II reaction center protein X of Thermostichus vulcanus (Synechococcus vulcanus).